The following is a 358-amino-acid chain: Uroporphyrinogen decarboxylase (358 aa).

Residues 27–31 (RQAGR), Asp-77, Tyr-154, Ser-209, and His-327 each bind substrate.

It belongs to the uroporphyrinogen decarboxylase family. In terms of assembly, homodimer.

It localises to the cytoplasm. It catalyses the reaction uroporphyrinogen III + 4 H(+) = coproporphyrinogen III + 4 CO2. It participates in porphyrin-containing compound metabolism; protoporphyrin-IX biosynthesis; coproporphyrinogen-III from 5-aminolevulinate: step 4/4. Its function is as follows. Catalyzes the decarboxylation of four acetate groups of uroporphyrinogen-III to yield coproporphyrinogen-III. The protein is Uroporphyrinogen decarboxylase of Azoarcus sp. (strain BH72).